The primary structure comprises 827 residues: Villin-1 (827 aa).

The necessary for homodimerization stretch occupies residues 1–126 (MTKLNAQVKG…IRKGGVASGM (126 aa)). The interval 1-734 (MTKLNAQVKG…YDDLKAELGN (734 aa)) is core. One copy of the Gelsolin-like 1 repeat lies at 27-76 (MQMVPVPSSTFGSFFDGDCYVVLAIHKTSSTLSYDIHYWIGQDSSQDEQG). 2 LPA/PIP2-binding site regions span residues 112–119 (KQGLVIRK) and 138–146 (RLLHVKGKR). Gelsolin-like repeat units lie at residues 148 to 188 (VLAG…MERL) and 265 to 309 (LVVR…QERS). Residue serine 366 is modified to Phosphoserine. Gelsolin-like repeat units lie at residues 407–457 (DLEL…DEIA), 528–568 (TKAF…DERE), and 631–672 (FLAT…EEKK). A phosphoserine mark is found at serine 735 and serine 776. A headpiece region spans residues 735-827 (SGDWSQIADE…QNIKKEKGLF (93 aa)). The HP domain maps to 761–827 (SGPLPTFPLE…QNIKKEKGLF (67 aa)). The tract at residues 816-824 (KQQNIKKEK) is LPA/PIP2-binding site 3.

It belongs to the villin/gelsolin family. In terms of assembly, monomer. Homodimer; homodimerization is necessary for actin-bundling. Associates with F-actin; phosphorylation at tyrosine residues decreases the association with F-actin. Interacts (phosphorylated at C-terminus tyrosine phosphorylation sites) with PLCG1 (via the SH2 domains). Interacts (phosphorylated form) with PLCG1; the interaction is enhanced by hepatocyte growth factor (HGF). Phosphorylated on tyrosine residues by SRC. The unphosphorylated form increases the initial rate of actin-nucleating activity, whereas the tyrosine phosphorylated form inhibits actin-nucleating activity, enhances actin-bundling activity and enhances actin-severing activity by reducing high Ca(2+) requirements. The tyrosine phosphorylated form does not regulate actin-capping activity. Tyrosine phosphorylation is essential for cell migration: tyrosine phosphorylation sites in the N-terminus half regulate actin reorganization and cell morphology, whereas tyrosine phosphorylation sites in the C-terminus half regulate cell migration via interaction with PLCG1. Tyrosine phosphorylation is induced by epidermal growth factor (EGF) and stimulates cell migration. Expressed in small intestin, colon, kidney and enterocytes (at protein level).

It is found in the cytoplasm. The protein resides in the cytoskeleton. Its subcellular location is the cell projection. It localises to the microvillus. The protein localises to the lamellipodium. It is found in the ruffle. The protein resides in the filopodium tip. Its subcellular location is the filopodium. Functionally, epithelial cell-specific Ca(2+)-regulated actin-modifying protein that modulates the reorganization of microvillar actin filaments. Plays a role in the actin nucleation, actin filament bundle assembly, actin filament capping and severing. Binds phosphatidylinositol 4,5-bisphosphate (PIP2) and lysophosphatidic acid (LPA); binds LPA with higher affinity than PIP2. Binding to LPA increases its phosphorylation by SRC and inhibits all actin-modifying activities. Binding to PIP2 inhibits actin-capping and -severing activities but enhances actin-bundling activity. Regulates the intestinal epithelial cell morphology, cell invasion, cell migration and apoptosis. Protects against apoptosis induced by dextran sodium sulfate (DSS) in the gastrointestinal epithelium. Appears to regulate cell death by maintaining mitochondrial integrity. Enhances hepatocyte growth factor (HGF)-induced epithelial cell motility, chemotaxis and wound repair. Upon S.flexneri cell infection, its actin-severing activity enhances actin-based motility of the bacteria and plays a role during the dissemination. The protein is Villin-1 (Vil1) of Mus musculus (Mouse).